Reading from the N-terminus, the 126-residue chain is Glycine cleavage system H protein (126 aa).

Residues 24 to 105 enclose the Lipoyl-binding domain; the sequence is TLTVGITDHA…AYGVWLFKIK (82 aa). Position 65 is an N6-lipoyllysine (lysine 65).

This sequence belongs to the GcvH family. The glycine cleavage system is composed of four proteins: P, T, L and H. It depends on (R)-lipoate as a cofactor.

Functionally, the glycine cleavage system catalyzes the degradation of glycine. The H protein shuttles the methylamine group of glycine from the P protein to the T protein. This Burkholderia cenocepacia (strain HI2424) protein is Glycine cleavage system H protein.